Reading from the N-terminus, the 235-residue chain is 6-carboxyhexanoate--CoA ligase (235 aa).

It belongs to the BioW family. Homodimer. It depends on Mg(2+) as a cofactor.

The catalysed reaction is heptanedioate + ATP + CoA = 6-carboxyhexanoyl-CoA + AMP + diphosphate. Its pathway is metabolic intermediate metabolism; pimeloyl-CoA biosynthesis; pimeloyl-CoA from pimelate: step 1/1. Functionally, catalyzes the transformation of pimelate into pimeloyl-CoA with concomitant hydrolysis of ATP to AMP. The polypeptide is 6-carboxyhexanoate--CoA ligase (Desulfovibrio desulfuricans (strain ATCC 27774 / DSM 6949 / MB)).